Consider the following 270-residue polypeptide: 3-phenylpropionate-dihydrodiol/cinnamic acid-dihydrodiol dehydrogenase (270 aa).

Residue 10 to 34 coordinates NAD(+); that stretch reads FITGGGSGLGLALVERFIEEGAQVA. Ser-143 contacts substrate. Tyr-156 (proton acceptor) is an active-site residue.

This sequence belongs to the short-chain dehydrogenases/reductases (SDR) family.

It catalyses the reaction 3-(cis-5,6-dihydroxycyclohexa-1,3-dien-1-yl)propanoate + NAD(+) = 3-(2,3-dihydroxyphenyl)propanoate + NADH + H(+). It carries out the reaction (2E)-3-(cis-5,6-dihydroxycyclohexa-1,3-dien-1-yl)prop-2-enoate + NAD(+) = (2E)-3-(2,3-dihydroxyphenyl)prop-2-enoate + NADH + H(+). Its pathway is aromatic compound metabolism; 3-phenylpropanoate degradation. In terms of biological role, converts 3-phenylpropionate-dihydrodiol (PP-dihydrodiol) and cinnamic acid-dihydrodiol (CI-dihydrodiol) into 3-(2,3-dihydroxylphenyl)propanoic acid (DHPP) and 2,3-dihydroxicinnamic acid (DHCI), respectively. This is 3-phenylpropionate-dihydrodiol/cinnamic acid-dihydrodiol dehydrogenase from Escherichia coli O7:K1 (strain IAI39 / ExPEC).